The sequence spans 365 residues: Spermidine-binding periplasmic protein SpuE (365 aa).

An N-terminal signal peptide occupies residues 1-24 (MQHSIGKTLLVAALATAIAGPVQA). 4 residues coordinate spermidine: T35, E181, D242, and N269.

The protein belongs to the bacterial solute-binding protein PotD/PotF family.

The protein localises to the periplasm. In terms of biological role, spermidine-binding protein probably required for its uptake into cells. Binds spermidine with high affinity (KD=14.3 nM). Does not bind putrescine, cadaverine or spermine. Spermidine binding induces large inter-domain conformational changes. Implicated in induction of type 3 secretion systems (T3SS), which play a role in virulence. The polypeptide is Spermidine-binding periplasmic protein SpuE (spuE) (Pseudomonas aeruginosa (strain ATCC 15692 / DSM 22644 / CIP 104116 / JCM 14847 / LMG 12228 / 1C / PRS 101 / PAO1)).